The chain runs to 418 residues: Serine--tRNA ligase (418 aa).

232-234 (TAE) provides a ligand contact to L-serine. Residues 263 to 265 (RRE) and Val-279 contribute to the ATP site. Glu-286 contacts L-serine. 350 to 353 (EISS) is an ATP binding site. An L-serine-binding site is contributed by Ser-385.

The protein belongs to the class-II aminoacyl-tRNA synthetase family. Type-1 seryl-tRNA synthetase subfamily. Homodimer. The tRNA molecule binds across the dimer.

Its subcellular location is the cytoplasm. It carries out the reaction tRNA(Ser) + L-serine + ATP = L-seryl-tRNA(Ser) + AMP + diphosphate + H(+). The catalysed reaction is tRNA(Sec) + L-serine + ATP = L-seryl-tRNA(Sec) + AMP + diphosphate + H(+). The protein operates within aminoacyl-tRNA biosynthesis; selenocysteinyl-tRNA(Sec) biosynthesis; L-seryl-tRNA(Sec) from L-serine and tRNA(Sec): step 1/1. Its function is as follows. Catalyzes the attachment of serine to tRNA(Ser). Is also able to aminoacylate tRNA(Sec) with serine, to form the misacylated tRNA L-seryl-tRNA(Sec), which will be further converted into selenocysteinyl-tRNA(Sec). This is Serine--tRNA ligase from Leptospira biflexa serovar Patoc (strain Patoc 1 / Ames).